A 283-amino-acid polypeptide reads, in one-letter code: Pantothenate synthetase (283 aa).

ATP is bound at residue Met26–His33. Residue His33 is the Proton donor of the active site. Position 57 (Gln57) interacts with (R)-pantoate. Gln57 contacts beta-alanine. Gly148–Asp151 serves as a coordination point for ATP. (R)-pantoate is bound at residue Gln154. Residue Leu185–Arg188 participates in ATP binding.

Belongs to the pantothenate synthetase family. As to quaternary structure, homodimer.

It is found in the cytoplasm. It catalyses the reaction (R)-pantoate + beta-alanine + ATP = (R)-pantothenate + AMP + diphosphate + H(+). It functions in the pathway cofactor biosynthesis; (R)-pantothenate biosynthesis; (R)-pantothenate from (R)-pantoate and beta-alanine: step 1/1. Functionally, catalyzes the condensation of pantoate with beta-alanine in an ATP-dependent reaction via a pantoyl-adenylate intermediate. The protein is Pantothenate synthetase of Polaromonas naphthalenivorans (strain CJ2).